Reading from the N-terminus, the 1489-residue chain is Sex-determining transformer protein 2 (1489 aa).

The N-terminal stretch at 1–33 (MKLAFNKLLVASVVFTVLSFGLLLASLFTTTAT) is a signal peptide. Helical transmembrane passes span 454–474 (MIYFILGACALMVALFAAFAF), 489–509 (GFITGLLFIFLCKSGGLILID), 513–533 (LCYITMHLAFNLVMTARVTFI), 600–620 (YWFLIAIVLVPVIGVYWFFID), 622–642 (DVQKICIVLLPAFLIAAFEEM), 749–769 (AVVVSSVAALLILLSIGLLFI), 931–951 (IFAAAVLAGFFSIIVVFFSIG), 958–978 (LAFAFFVVGNRLEIAAIVSLF), 986–1006 (YTNVAVFVGFLAAWTPFCDLA), 1041–1061 (VQIFAIFLTATILLIVITAII), and 1066–1086 (AFFIPTVILLITLLLAVFNSL). The interaction with fem-3 stretch occupies residues 1138–1288 (EFSIRPTENT…EQQEVTDDVA (151 aa)). 3 disordered regions span residues 1143–1176 (PTENTKHYAPRPIDNSDPPEQAADEEVVNQDPSM), 1233–1393 (LLRQ…YPPS), and 1412–1489 (RNLP…TPGL). Basic and acidic residues-rich tracts occupy residues 1275–1298 (DPAKEQQEVTDDVATRYKEEEVRK), 1326–1340 (VSREAPEDSPNREPR), and 1423–1433 (RPRDWDQRRLV). Residues 1402 to 1423 (CEDVYWKYNERNLPDNVPMPPR) form an MX regulatory domain; required for tra-1 binding region. The segment covering 1444 to 1456 (VPPPGRSAIPIPP) has biased composition (pro residues). Over residues 1460–1482 (RLRERRREQHLREQEARRNRPES) the composition is skewed to basic and acidic residues.

Interacts with tra-1 and fem-3.

The protein localises to the membrane. Functionally, plays a major role in controlling sexual cell fates. Promotes female development in XX animals where it sequesters one or more of the FEM proteins to the membrane thereby freeing the tra-1 protein (a putative transcription factor) to enter the nucleus and promote female development. In XO animals it acts as a receptor for her-1 which prevents it from binding to FEM proteins thereby repressing the activity of tra-1. Negatively regulates male development when bound to fem-3 and is required together with tra-1 for promoting spermatogenesis. Also required for feminizing tra-3 activity. This Caenorhabditis briggsae protein is Sex-determining transformer protein 2.